The chain runs to 382 residues: Lipid-A-disaccharide synthase (382 aa).

This sequence belongs to the LpxB family.

The enzyme catalyses a lipid X + a UDP-2-N,3-O-bis[(3R)-3-hydroxyacyl]-alpha-D-glucosamine = a lipid A disaccharide + UDP + H(+). It functions in the pathway bacterial outer membrane biogenesis; LPS lipid A biosynthesis. In terms of biological role, condensation of UDP-2,3-diacylglucosamine and 2,3-diacylglucosamine-1-phosphate to form lipid A disaccharide, a precursor of lipid A, a phosphorylated glycolipid that anchors the lipopolysaccharide to the outer membrane of the cell. The polypeptide is Lipid-A-disaccharide synthase (Alteromonas mediterranea (strain DSM 17117 / CIP 110805 / LMG 28347 / Deep ecotype)).